The following is a 237-amino-acid chain: Ribonuclease PH (237 aa).

Phosphate contacts are provided by residues Arg-86 and 124 to 126; that span reads GTR.

Belongs to the RNase PH family. As to quaternary structure, homohexameric ring arranged as a trimer of dimers.

It carries out the reaction tRNA(n+1) + phosphate = tRNA(n) + a ribonucleoside 5'-diphosphate. Its function is as follows. Phosphorolytic 3'-5' exoribonuclease that plays an important role in tRNA 3'-end maturation. Removes nucleotide residues following the 3'-CCA terminus of tRNAs; can also add nucleotides to the ends of RNA molecules by using nucleoside diphosphates as substrates, but this may not be physiologically important. Probably plays a role in initiation of 16S rRNA degradation (leading to ribosome degradation) during starvation. This Idiomarina loihiensis (strain ATCC BAA-735 / DSM 15497 / L2-TR) protein is Ribonuclease PH.